Consider the following 504-residue polypeptide: Maturase K (504 aa).

This sequence belongs to the intron maturase 2 family. MatK subfamily.

Its subcellular location is the plastid. It localises to the chloroplast. Usually encoded in the trnK tRNA gene intron. Probably assists in splicing its own and other chloroplast group II introns. In Impatiens capensis (Spotted jewelweed), this protein is Maturase K.